The primary structure comprises 417 residues: Squalene synthase (417 aa).

Residues arginine 52 and arginine 77 each coordinate NADP(+). Mg(2+) is bound by residues aspartate 80, glutamate 83, and aspartate 84. Position 218 (arginine 218) interacts with NADP(+). A helical transmembrane segment spans residues serine 284–tyrosine 304. Residues lysine 315 and arginine 317 each coordinate NADP(+). Residues proline 384–leucine 404 form a helical membrane-spanning segment.

The protein belongs to the phytoene/squalene synthase family. Mg(2+) serves as cofactor.

Its subcellular location is the endoplasmic reticulum membrane. It carries out the reaction 2 (2E,6E)-farnesyl diphosphate + NADPH + H(+) = squalene + 2 diphosphate + NADP(+). The catalysed reaction is 2 (2E,6E)-farnesyl diphosphate + NADH + H(+) = squalene + 2 diphosphate + NAD(+). The enzyme catalyses presqualene diphosphate + NADH + H(+) = squalene + diphosphate + NAD(+). It catalyses the reaction presqualene diphosphate + NADPH + H(+) = squalene + diphosphate + NADP(+). It carries out the reaction 2 (2E,6E)-farnesyl diphosphate = presqualene diphosphate + diphosphate. It participates in terpene metabolism; lanosterol biosynthesis; lanosterol from farnesyl diphosphate: step 1/3. Its function is as follows. Catalyzes the condensation of 2 farnesyl pyrophosphate (FPP) moieties to form squalene. Proceeds in two distinct steps. In the first half-reaction, two molecules of FPP react to form the stable presqualene diphosphate intermediate (PSQPP), with concomitant release of a proton and a molecule of inorganic diphosphate. In the second half-reaction, PSQPP undergoes heterolysis, isomerization, and reduction with NADPH or NADH to form squalene. It is the first committed enzyme of the sterol biosynthesis pathway. In Bos taurus (Bovine), this protein is Squalene synthase (FDFT1).